The following is a 156-amino-acid chain: Small ribosomal subunit protein uS7 (156 aa).

It belongs to the universal ribosomal protein uS7 family. Part of the 30S ribosomal subunit. Contacts proteins S9 and S11.

Its function is as follows. One of the primary rRNA binding proteins, it binds directly to 16S rRNA where it nucleates assembly of the head domain of the 30S subunit. Is located at the subunit interface close to the decoding center, probably blocks exit of the E-site tRNA. The polypeptide is Small ribosomal subunit protein uS7 (Tolumonas auensis (strain DSM 9187 / NBRC 110442 / TA 4)).